The following is a 539-amino-acid chain: 2-isopropylmalate synthase (539 aa).

A Pyruvate carboxyltransferase domain is found at 8 to 269; that stretch reads VLIFDTTLRD…YFNPFFGRPP (262 aa). Residues aspartate 17, histidine 208, histidine 210, and asparagine 244 each contribute to the Mn(2+) site. The regulatory domain stretch occupies residues 408–539; it reads QLKLVQVSCG…DLAKVEKKGI (132 aa).

The protein belongs to the alpha-IPM synthase/homocitrate synthase family. LeuA type 1 subfamily. As to quaternary structure, homodimer. Mn(2+) serves as cofactor.

Its subcellular location is the cytoplasm. It carries out the reaction 3-methyl-2-oxobutanoate + acetyl-CoA + H2O = (2S)-2-isopropylmalate + CoA + H(+). It functions in the pathway amino-acid biosynthesis; L-leucine biosynthesis; L-leucine from 3-methyl-2-oxobutanoate: step 1/4. Functionally, catalyzes the condensation of the acetyl group of acetyl-CoA with 3-methyl-2-oxobutanoate (2-ketoisovalerate) to form 3-carboxy-3-hydroxy-4-methylpentanoate (2-isopropylmalate). The sequence is that of 2-isopropylmalate synthase from Prochlorococcus marinus (strain NATL2A).